The following is a 167-amino-acid chain: MTRKSFSFFLLGLILTVGIDQTVKYWIMHNMLLGTEIPLLPFLSLYHVRNSGIAFSFFSSFSHWGLIALTLIILIFLLWLWKNTEYNKFLSRFGLTLIIGGAIGNLIDRICFYYVIDYILFYIDDIFYFAVFNLADTFITLGVIAIVTEELRIWIKEKRHSKRTFSR.

Helical transmembrane passes span 8–28 (FFLLGLILTVGIDQTVKYWIM), 61–81 (FSHWGLIALTLIILIFLLWLW), and 93–113 (FGLTLIIGGAIGNLIDRICFY). Catalysis depends on residues Asp-117 and Asp-136. The helical transmembrane segment at 126–146 (IFYFAVFNLADTFITLGVIAI) threads the bilayer.

The protein belongs to the peptidase A8 family.

Its subcellular location is the cell inner membrane. It catalyses the reaction Release of signal peptides from bacterial membrane prolipoproteins. Hydrolyzes -Xaa-Yaa-Zaa-|-(S,diacylglyceryl)Cys-, in which Xaa is hydrophobic (preferably Leu), and Yaa (Ala or Ser) and Zaa (Gly or Ala) have small, neutral side chains.. It participates in protein modification; lipoprotein biosynthesis (signal peptide cleavage). Its function is as follows. This protein specifically catalyzes the removal of signal peptides from prolipoproteins. The protein is Lipoprotein signal peptidase of Bartonella quintana (strain Toulouse) (Rochalimaea quintana).